Reading from the N-terminus, the 39-residue chain is Gonadal protein gdl-ORF39 (39 aa).

In terms of tissue distribution, in bundles of maturing sperm of larval, pupal and adult males.

The protein is Gonadal protein gdl-ORF39 (gdl-ORF39) of Drosophila melanogaster (Fruit fly).